Reading from the N-terminus, the 278-residue chain is MTEAFARAKINLTLHVTGQRPDGYHLLDSLVVFADVGDRVRTEPAEALSLAITGPQAVNLPVSDDNLVLRAARAMGGQGARITLEKHLPVASGIGGGSADAAATLKALAELWQRPLPEAAAVLRLGADVPVCLEGRAVRMAGVGEILEPLAGPLPPAWLVLANPGVSVPTPPVFKALARRDNPPMPERLPDWGSADELAAFLAAMRNDLEAPAIALAPEVAETRAALAAEPGCLIARMSGSGATCFGLFAEERPARAAAEALRAAHPGWWIEPARMAG.

The active site involves Lys-9. Residue 89–99 participates in ATP binding; the sequence is PVASGIGGGSA. Asp-128 is a catalytic residue.

This sequence belongs to the GHMP kinase family. IspE subfamily.

The catalysed reaction is 4-CDP-2-C-methyl-D-erythritol + ATP = 4-CDP-2-C-methyl-D-erythritol 2-phosphate + ADP + H(+). It participates in isoprenoid biosynthesis; isopentenyl diphosphate biosynthesis via DXP pathway; isopentenyl diphosphate from 1-deoxy-D-xylulose 5-phosphate: step 3/6. Catalyzes the phosphorylation of the position 2 hydroxy group of 4-diphosphocytidyl-2C-methyl-D-erythritol. This chain is 4-diphosphocytidyl-2-C-methyl-D-erythritol kinase, found in Cereibacter sphaeroides (strain ATCC 17025 / ATH 2.4.3) (Rhodobacter sphaeroides).